The sequence spans 98 residues: Hainantoxin-XVII.3 (98 aa).

The signal sequence occupies residues 1-40; the sequence is MTTVGVSLFRRSPEKITMKIATFLGLSFLLIASYFLICEA. Positions 41–64 are excised as a propeptide; it reads QHPGFQELLILEENMRDPENSKER. Cystine bridges form between Cys66–Cys81, Cys73–Cys85, and Cys80–Cys95.

This sequence belongs to the hainantoxin family. 17 subfamily. Expressed by the venom gland.

Its subcellular location is the secreted. Its function is as follows. Inhibits with low potency Kv1.2/KCNA2 and Kv1.3/KCNA3 voltage-gated potassium channels. This Cyriopagopus hainanus (Chinese bird spider) protein is Hainantoxin-XVII.3.